The sequence spans 185 residues: Large ribosomal subunit protein bL25 (185 aa).

It belongs to the bacterial ribosomal protein bL25 family. CTC subfamily. As to quaternary structure, part of the 50S ribosomal subunit; part of the 5S rRNA/L5/L18/L25 subcomplex. Contacts the 5S rRNA. Binds to the 5S rRNA independently of L5 and L18.

This is one of the proteins that binds to the 5S RNA in the ribosome where it forms part of the central protuberance. The sequence is that of Large ribosomal subunit protein bL25 from Chlamydia abortus (strain DSM 27085 / S26/3) (Chlamydophila abortus).